The chain runs to 443 residues: F-box only protein 39 (443 aa).

Positions 13 to 59 (QSCWATLPDVCLRRVFWWLGDRDRSRAALVCRKWNQIMYSADLWRYR) constitute an F-box domain.

As to quaternary structure, directly interacts with SKP1 and CUL1.

In terms of biological role, substrate-recognition component of the SCF (SKP1-CUL1-F-box protein)-type E3 ubiquitin ligase complex. The polypeptide is F-box only protein 39 (Fbxo39) (Rattus norvegicus (Rat)).